We begin with the raw amino-acid sequence, 458 residues long: F-box/FBD/LRR-repeat protein At1g78750 (458 aa).

Residues 17-67 (VDWISNLPETLLCQVLFYLPTKDVVKSSVLSSRWRNLWKYVPGFNLSYCDF) enclose the F-box domain. LRR repeat units lie at residues 152-183 (CETL…HLSI), 184-209 (VKFA…NINR), 231-258 (VADT…RLSD), 302-327 (DFLV…YDYS), and 345-370 (FYGY…VVGS). Positions 376–428 (KEGINILSVPRGFLSSLEYVKIERPLKGEAMEMKLVSYLLENSTILKKLTLCL) constitute an FBD domain.

This is F-box/FBD/LRR-repeat protein At1g78750 from Arabidopsis thaliana (Mouse-ear cress).